We begin with the raw amino-acid sequence, 353 residues long: Thiamine thiazole synthase 1, chloroplastic (353 aa).

The transit peptide at 1–48 (MATLTSSICSKPKASVFDPHKSSFHGVPIATQARLSPVKSTPVNLAVT) directs the protein to the chloroplast. Residues Ala-97, 117–118 (EQ), Gly-125, and Ala-190 each bind substrate. 2,3-didehydroalanine (Cys) is present on Cys-219. Substrate contacts are provided by residues Asp-221, His-236, Met-288, and 298–300 (RMG).

Belongs to the THI4 family. As to quaternary structure, homooctamer. Requires Fe cation as cofactor. Post-translationally, during the catalytic reaction, a sulfide is transferred from Cys-219 to a reaction intermediate, generating a dehydroalanine residue.

It is found in the plastid. The protein localises to the chloroplast. It catalyses the reaction [ADP-thiazole synthase]-L-cysteine + glycine + NAD(+) = [ADP-thiazole synthase]-dehydroalanine + ADP-5-ethyl-4-methylthiazole-2-carboxylate + nicotinamide + 3 H2O + 2 H(+). Functionally, involved in biosynthesis of the thiamine precursor thiazole. Catalyzes the conversion of NAD and glycine to adenosine diphosphate 5-(2-hydroxyethyl)-4-methylthiazole-2-carboxylic acid (ADT), an adenylated thiazole intermediate. The reaction includes an iron-dependent sulfide transfer from a conserved cysteine residue of the protein to a thiazole intermediate. The enzyme can only undergo a single turnover, which suggests it is a suicide enzyme. May have additional roles in adaptation to various stress conditions and in DNA damage tolerance. This is Thiamine thiazole synthase 1, chloroplastic from Vitis vinifera (Grape).